The following is a 106-amino-acid chain: MFSILKQGVISKSLLAATSLKATASRFSFSTSVASRVDGTKNGWSFTASNVADQTTDIGINSESAMSCNDQEQPLSFYVQTVRDDLNSPNWGAEQRKGAFDWEVSA.

Its subcellular location is the mitochondrion. Functionally, stress-responsive protein that may play a role in regulation of cell cycle. The chain is Stress-responsive protein 1 (sro1) from Schizosaccharomyces pombe (strain 972 / ATCC 24843) (Fission yeast).